A 136-amino-acid chain; its full sequence is Large-conductance mechanosensitive channel (136 aa).

2 helical membrane passes run 9-29 (AFAS…GAAF) and 79-99 (IQTV…LKAI).

The protein belongs to the MscL family. As to quaternary structure, homopentamer.

The protein resides in the cell inner membrane. Its function is as follows. Channel that opens in response to stretch forces in the membrane lipid bilayer. May participate in the regulation of osmotic pressure changes within the cell. This chain is Large-conductance mechanosensitive channel, found in Shewanella sp. (strain MR-4).